Reading from the N-terminus, the 547-residue chain is Large cysteine-rich periplasmic protein OmcB, serovar C (547 aa).

The N-terminal stretch at 1–22 (MNKLIRRAVTIFAVTSVASLFA) is a signal peptide. Positions 23-40 (SGVLETSMAESLSTNVIS) are excised as a propeptide. Residues 45–84 (KAKDNTSHKSKKARKNHSKETPVDRKEVAPVHESKATGPK) are disordered. Residues 52-61 (HKSKKARKNH) show a composition bias toward basic residues. Residues 62–79 (SKETPVDRKEVAPVHESK) are compositionally biased toward basic and acidic residues.

Part of a disulfide cross-linked outer membrane complex (COMC) composed of the major outer membrane porin (MOMP), the small cysteine-rich protein (OmcA) and the large cysteine-rich periplasmic protein (OmcB).

The protein resides in the periplasm. Its function is as follows. In elementary bodies (EBs, the infectious stage, which is able to survive outside the host cell) provides the structural integrity of the outer envelope through disulfide cross-links with the small cysteine-rich protein and the major outer membrane porin. It has been described in publications as the Sarkosyl-insoluble COMC (Chlamydia outer membrane complex), and serves as the functional equivalent of peptidoglycan. This Chlamydia trachomatis protein is Large cysteine-rich periplasmic protein OmcB, serovar C (omcB).